The primary structure comprises 94 residues: Pyrimidine/purine nucleoside phosphorylase (94 aa).

It belongs to the nucleoside phosphorylase PpnP family.

The enzyme catalyses a purine D-ribonucleoside + phosphate = a purine nucleobase + alpha-D-ribose 1-phosphate. The catalysed reaction is adenosine + phosphate = alpha-D-ribose 1-phosphate + adenine. It catalyses the reaction cytidine + phosphate = cytosine + alpha-D-ribose 1-phosphate. It carries out the reaction guanosine + phosphate = alpha-D-ribose 1-phosphate + guanine. The enzyme catalyses inosine + phosphate = alpha-D-ribose 1-phosphate + hypoxanthine. The catalysed reaction is thymidine + phosphate = 2-deoxy-alpha-D-ribose 1-phosphate + thymine. It catalyses the reaction uridine + phosphate = alpha-D-ribose 1-phosphate + uracil. It carries out the reaction xanthosine + phosphate = alpha-D-ribose 1-phosphate + xanthine. Catalyzes the phosphorolysis of diverse nucleosides, yielding D-ribose 1-phosphate and the respective free bases. Can use uridine, adenosine, guanosine, cytidine, thymidine, inosine and xanthosine as substrates. Also catalyzes the reverse reactions. This is Pyrimidine/purine nucleoside phosphorylase from Vibrio parahaemolyticus serotype O3:K6 (strain RIMD 2210633).